We begin with the raw amino-acid sequence, 267 residues long: MPLLQLILVALIQGVTEFLPVSSSGHLILLPRLTGLEDQGQAIDVAVHVGTLAAVVLFFWRDVRAGLIGLPRALIGRLDTKGARLALGLIVATIPTVIFGTFLYFTGLSESLRSVAVIGWTMLVFGVVLYIADQRGPIDKSASDWGVRDAVIMGLWQMLALIPGTSRSGITITGARSLGYNREDGARIAMLMSIPTIIASGVLLGTEVALDADVDLMRDMGIAALLAMASALAALALMMRLLRSVSFTPYVIYRVALGMVLLFIAYG.

7 helical membrane passes run 1–21, 40–60, 85–105, 112–132, 188–208, 219–239, and 245–265; these read MPLL…FLPV, GQAI…LFFW, LALG…FLYF, LRSV…LYIA, IAML…GTEV, DMGI…ALMM, and VSFT…LFIA.

It belongs to the UppP family.

Its subcellular location is the cell inner membrane. The enzyme catalyses di-trans,octa-cis-undecaprenyl diphosphate + H2O = di-trans,octa-cis-undecaprenyl phosphate + phosphate + H(+). Functionally, catalyzes the dephosphorylation of undecaprenyl diphosphate (UPP). Confers resistance to bacitracin. The chain is Undecaprenyl-diphosphatase from Ruegeria sp. (strain TM1040) (Silicibacter sp.).